The following is a 235-amino-acid chain: Phosphoribosylaminoimidazole-succinocarboxamide synthase (235 aa).

It belongs to the SAICAR synthetase family.

It carries out the reaction 5-amino-1-(5-phospho-D-ribosyl)imidazole-4-carboxylate + L-aspartate + ATP = (2S)-2-[5-amino-1-(5-phospho-beta-D-ribosyl)imidazole-4-carboxamido]succinate + ADP + phosphate + 2 H(+). It participates in purine metabolism; IMP biosynthesis via de novo pathway; 5-amino-1-(5-phospho-D-ribosyl)imidazole-4-carboxamide from 5-amino-1-(5-phospho-D-ribosyl)imidazole-4-carboxylate: step 1/2. In Streptococcus thermophilus (strain ATCC BAA-491 / LMD-9), this protein is Phosphoribosylaminoimidazole-succinocarboxamide synthase.